The following is a 393-amino-acid chain: Acetylornithine aminotransferase 1 (393 aa).

Arg-131 lines the N(2)-acetyl-L-ornithine pocket. 215 to 218 (DEVQ) contributes to the pyridoxal 5'-phosphate binding site. An N6-(pyridoxal phosphate)lysine modification is found at Lys-244. N(2)-acetyl-L-ornithine is bound at residue Thr-272. Thr-273 is a binding site for pyridoxal 5'-phosphate.

It belongs to the class-III pyridoxal-phosphate-dependent aminotransferase family. ArgD subfamily. In terms of assembly, homodimer. Requires pyridoxal 5'-phosphate as cofactor.

It is found in the cytoplasm. It carries out the reaction N(2)-acetyl-L-ornithine + 2-oxoglutarate = N-acetyl-L-glutamate 5-semialdehyde + L-glutamate. The protein operates within amino-acid biosynthesis; L-arginine biosynthesis; N(2)-acetyl-L-ornithine from L-glutamate: step 4/4. The protein is Acetylornithine aminotransferase 1 of Bordetella bronchiseptica (strain ATCC BAA-588 / NCTC 13252 / RB50) (Alcaligenes bronchisepticus).